The primary structure comprises 543 residues: T-complex protein 1 subunit eta (543 aa).

The residue at position 1 (methionine 1) is an N-acetylmethionine. An ADP-binding site is contributed by glycine 41. ATP is bound at residue glycine 41. Lysine 67 bears the N6-acetyllysine mark. Position 92 (aspartate 92) interacts with Mg(2+). 6 residues coordinate ADP: glycine 93, threonine 94, threonine 95, serine 96, serine 164, and serine 165. Glycine 93 is a binding site for ATP. Serine 96 lines the ATP pocket. Residues lysine 250 and lysine 320 each carry the N6-acetyllysine modification. ATP contacts are provided by arginine 398 and glycine 409. Glycine 409 contacts ADP. Lysine 430 is covalently cross-linked (Glycyl lysine isopeptide (Lys-Gly) (interchain with G-Cter in SUMO2)). ADP is bound by residues glutamate 494 and arginine 499. An ATP-binding site is contributed by arginine 499. A disordered region spans residues 524–543 (RSTVDAPTAAGRGRGRGRPH). The residue at position 535 (arginine 535) is an Omega-N-methylarginine.

Belongs to the TCP-1 chaperonin family. Component of the chaperonin-containing T-complex (TRiC), a hexadecamer composed of two identical back-to-back stacked rings enclosing a protein folding chamber. Each ring is made up of eight different subunits: TCP1/CCT1, CCT2, CCT3, CCT4, CCT5, CCT6A/CCT6, CCT7, CCT8. Interacts with PACRG. Interacts with DLEC1.

It is found in the cytoplasm. The enzyme catalyses ATP + H2O = ADP + phosphate + H(+). In terms of biological role, component of the chaperonin-containing T-complex (TRiC), a molecular chaperone complex that assists the folding of actin, tubulin and other proteins upon ATP hydrolysis. The TRiC complex mediates the folding of WRAP53/TCAB1, thereby regulating telomere maintenance. This Homo sapiens (Human) protein is T-complex protein 1 subunit eta (CCT7).